The following is a 162-amino-acid chain: D-beta-D-heptose 1-phosphate adenylyltransferase (162 aa).

The catalysed reaction is D-glycero-beta-D-manno-heptose 1-phosphate + ATP + H(+) = ADP-D-glycero-beta-D-manno-heptose + diphosphate. Its pathway is nucleotide-sugar biosynthesis; ADP-L-glycero-beta-D-manno-heptose biosynthesis; ADP-L-glycero-beta-D-manno-heptose from D-glycero-beta-D-manno-heptose 7-phosphate: step 3/4. It participates in bacterial outer membrane biogenesis; LPS core biosynthesis. Functionally, catalyzes the ADP transfer from ATP to D-glycero-beta-D-manno-heptose 1-phosphate, yielding ADP-D-glycero-beta-D-manno-heptose. Cannot use GTP, UTP, or CTP as substrate. Is not active against the alpha-anomer substrate. Is also able to catalyze the ADP transfer to beta-glucose 1-phosphate in vitro, yielding ADP-beta-glucose. This chain is D-beta-D-heptose 1-phosphate adenylyltransferase, found in Bordetella bronchiseptica (strain ATCC BAA-588 / NCTC 13252 / RB50) (Alcaligenes bronchisepticus).